The following is a 395-amino-acid chain: Acetate kinase (395 aa).

Residue N8 coordinates Mg(2+). An ATP-binding site is contributed by K15. R89 contributes to the substrate binding site. D146 functions as the Proton donor/acceptor in the catalytic mechanism. ATP contacts are provided by residues 206–210 (HLGNG), 281–283 (DLR), and 329–333 (GIGEN). E382 contributes to the Mg(2+) binding site.

The protein belongs to the acetokinase family. Homodimer. Mg(2+) serves as cofactor. It depends on Mn(2+) as a cofactor.

The protein resides in the cytoplasm. It carries out the reaction acetate + ATP = acetyl phosphate + ADP. It functions in the pathway metabolic intermediate biosynthesis; acetyl-CoA biosynthesis; acetyl-CoA from acetate: step 1/2. Its activity is regulated as follows. Induced by glucose excess, the induction may be mediated by CcpA transcriptional regulator. Functionally, catalyzes the formation of acetyl phosphate from acetate and ATP. Can also catalyze the reverse reaction. Appears to favor the formation of acetate. Involved in the secretion of excess carbohydrate. The sequence is that of Acetate kinase from Bacillus subtilis (strain 168).